An 89-amino-acid chain; its full sequence is Small ribosomal subunit protein uS15 (89 aa).

This sequence belongs to the universal ribosomal protein uS15 family. In terms of assembly, part of the 30S ribosomal subunit. Forms a bridge to the 50S subunit in the 70S ribosome, contacting the 23S rRNA.

Its function is as follows. One of the primary rRNA binding proteins, it binds directly to 16S rRNA where it helps nucleate assembly of the platform of the 30S subunit by binding and bridging several RNA helices of the 16S rRNA. In terms of biological role, forms an intersubunit bridge (bridge B4) with the 23S rRNA of the 50S subunit in the ribosome. The protein is Small ribosomal subunit protein uS15 of Acaryochloris marina (strain MBIC 11017).